Here is a 164-residue protein sequence, read N- to C-terminus: Phosphopantetheine adenylyltransferase (164 aa).

Residue Ser-9 participates in substrate binding. ATP-binding positions include 9 to 10 (SF) and His-17. Residues Lys-41, Leu-73, and Lys-87 each coordinate substrate. Residues 88–90 (GLR), Glu-98, and 123–129 (YSYISSS) each bind ATP.

This sequence belongs to the bacterial CoaD family. In terms of assembly, homohexamer. Mg(2+) serves as cofactor.

It is found in the cytoplasm. The enzyme catalyses (R)-4'-phosphopantetheine + ATP + H(+) = 3'-dephospho-CoA + diphosphate. It functions in the pathway cofactor biosynthesis; coenzyme A biosynthesis; CoA from (R)-pantothenate: step 4/5. Its function is as follows. Reversibly transfers an adenylyl group from ATP to 4'-phosphopantetheine, yielding dephospho-CoA (dPCoA) and pyrophosphate. The protein is Phosphopantetheine adenylyltransferase of Clostridium perfringens (strain SM101 / Type A).